An 85-amino-acid polypeptide reads, in one-letter code: Sodium channel neurotoxin MeuNaTxalpha-2 (85 aa).

The first 19 residues, 1 to 19 (MNYLVMISLALLLMTGVES), serve as a signal peptide directing secretion. The LCN-type CS-alpha/beta domain occupies 21–83 (RDAYIANDRN…VPIRIPGECR (63 aa)). 4 disulfide bridges follow: cysteine 31/cysteine 82, cysteine 35/cysteine 55, cysteine 41/cysteine 65, and cysteine 45/cysteine 67. Residue arginine 83 is modified to Arginine amide.

The protein belongs to the long (4 C-C) scorpion toxin superfamily. Sodium channel inhibitor family. Alpha subfamily. Expressed by the venom gland.

The protein localises to the secreted. In terms of biological role, alpha toxins bind voltage-independently at site-3 of sodium channels (Nav) and inhibit the inactivation of the activated channels, thereby blocking neuronal transmission. This toxin inhibits inactivation of Nav1.4/SCN4A (EC(50)=2.23 uM) and drosophila DmNav1 (EC(50)=220 nM). The toxin (1 uM) does not significantly shift the midpoint of activation at the two channels, but induces a significant depolarizing shift in the V(1/2) of inactivation of the channels. In addition, the toxin accelerates the recovery from fast inactivation in Nav1.4/SCN4A and DmNav1. It also shows antimicrobial activity. This is Sodium channel neurotoxin MeuNaTxalpha-2 from Mesobuthus eupeus (Lesser Asian scorpion).